Reading from the N-terminus, the 200-residue chain is BREX protein BrxA (200 aa).

It belongs to the BrxA family.

BREX systems (bacteriophage exclusion) provide immunity against bacteriophage. Part of a type 1 BREX system. This system allows phage adsorption but prevents phage DNA replication, without degradation of the phage DNA. Methylation of bacterial DNA by PglX probably guides self/non-self discrimination. When the brxA-brxB-brxC-pglX and pglZ-brxL operons are transformed into a susceptible B.subtilis strain (BEST7003) they confer resistance to bacteriophages SPbeta, SP16, Zeta, phi3T and SP02 and partial protection to phages SP01 and SP82G (these include lytic and temperate phage). They do not protect against phages phi105, rho10 or rho14. Additionally confers a very slight reduction in efficiency of plasmid transformation. The chain is BREX protein BrxA from Bacillus cereus (strain H3081.97).